Consider the following 255-residue polypeptide: Large ribosomal subunit protein eL8 (255 aa).

A compositionally biased stretch (basic residues) spans Met-1–Lys-16. Residues Met-1–Ser-28 form a disordered region.

It belongs to the eukaryotic ribosomal protein eL8 family.

This is Large ribosomal subunit protein eL8 (RPL7A) from Tetrahymena thermophila.